The following is a 500-amino-acid chain: Protein PIGMENT DEFECTIVE 338, chloroplastic (500 aa).

The N-terminal 63 residues, 1–63, are a transit peptide targeting the chloroplast; sequence MQTLLCQPCK…FAFRGFSICR (63 aa). S1 motif domains follow at residues 156 to 265, 283 to 351, and 362 to 431; these read KPGD…LSSR, NEPI…LSEK, and GTLL…LSIA.

Belongs to the bacterial ribosomal protein bS1 family. Interacts with CRP1 and PRFB3. In terms of tissue distribution, present in leaves (at protein level). Confined to leaf chlorenchyma cells.

The protein localises to the plastid. The protein resides in the chloroplast. Functionally, RNA-binding protein that acts as an RNA chaperone to remodel RNA structure and activates their translation. Required for seed pigmentation. Necessary for chloroplast development and subsequent photosynthetic electron flow, as well as for non-photochemical quenching (NPQ). Rubisco regulatory factor which regulates the concerted biogenesis of NDH, PSI (including PsaA, PsaB, PsaD, PsaF, PsaL, PsaG, PsaK and NdhH) and Cytb(6)f (including PetA, PetB, PetC and PetD) complexes. Binds specifically to and involved in the post-transcriptional regulation of plastid-encoded mRNAs (e.g. rbcL, petA, petB, petD and Ycf1), thus modulating expression, cellular localization/compartmentalization, and photosynthetic function. This is Protein PIGMENT DEFECTIVE 338, chloroplastic from Arabidopsis thaliana (Mouse-ear cress).